Reading from the N-terminus, the 83-residue chain is Small ribosomal subunit protein uS17c (83 aa).

The protein belongs to the universal ribosomal protein uS17 family. As to quaternary structure, part of the 30S ribosomal subunit.

It localises to the plastid. Its subcellular location is the chloroplast. In terms of biological role, one of the primary rRNA binding proteins, it binds specifically to the 5'-end of 16S ribosomal RNA. The protein is Small ribosomal subunit protein uS17c (rps17) of Pyropia yezoensis (Susabi-nori).